Here is a 421-residue protein sequence, read N- to C-terminus: 4-hydroxy-3-methylbut-2-en-1-yl diphosphate synthase (flavodoxin) (421 aa).

Positions 298, 301, 344, and 351 each coordinate [4Fe-4S] cluster.

The protein belongs to the IspG family. It depends on [4Fe-4S] cluster as a cofactor.

The catalysed reaction is (2E)-4-hydroxy-3-methylbut-2-enyl diphosphate + oxidized [flavodoxin] + H2O + 2 H(+) = 2-C-methyl-D-erythritol 2,4-cyclic diphosphate + reduced [flavodoxin]. The protein operates within isoprenoid biosynthesis; isopentenyl diphosphate biosynthesis via DXP pathway; isopentenyl diphosphate from 1-deoxy-D-xylulose 5-phosphate: step 5/6. Functionally, converts 2C-methyl-D-erythritol 2,4-cyclodiphosphate (ME-2,4cPP) into 1-hydroxy-2-methyl-2-(E)-butenyl 4-diphosphate. The polypeptide is 4-hydroxy-3-methylbut-2-en-1-yl diphosphate synthase (flavodoxin) (Neisseria meningitidis serogroup C / serotype 2a (strain ATCC 700532 / DSM 15464 / FAM18)).